The following is a 964-amino-acid chain: Protein translocase subunit SecA (964 aa).

ATP-binding positions include glutamine 86, 104 to 108, and aspartate 494; that span reads GEGKT. The disordered stretch occupies residues 848–964; that stretch reads AESADTIAVA…YKMCHGQNEK (117 aa). Residues 871–882 show a composition bias toward acidic residues; the sequence is AEGEVEEEDEDT. The span at 889–900 shows a compositional bias: low complexity; sequence AESAAASGAGES. The Zn(2+) site is built by cysteine 947, cysteine 949, cysteine 958, and histidine 959.

Belongs to the SecA family. In terms of assembly, monomer and homodimer. Part of the essential Sec protein translocation apparatus which comprises SecA, SecYEG and auxiliary proteins SecDF. Other proteins may also be involved. It depends on Zn(2+) as a cofactor.

The protein resides in the cell membrane. The protein localises to the cytoplasm. The enzyme catalyses ATP + H2O + cellular proteinSide 1 = ADP + phosphate + cellular proteinSide 2.. Functionally, part of the Sec protein translocase complex. Interacts with the SecYEG preprotein conducting channel. Has a central role in coupling the hydrolysis of ATP to the transfer of proteins into and across the cell membrane, serving as an ATP-driven molecular motor driving the stepwise translocation of polypeptide chains across the membrane. The chain is Protein translocase subunit SecA from Bifidobacterium longum (strain DJO10A).